Reading from the N-terminus, the 391-residue chain is uncharacterized protein (391 aa).

The signal sequence occupies residues 1-20 (MRKLFLLSILMIGVIVAFAG). Cys21 carries S-archaeol cysteine lipidation. Residues 104–377 (RIVTDFYCPI…DFAKMIHPEL (274 aa)) enclose the Fe/B12 periplasmic-binding domain.

Its subcellular location is the cell membrane. This is an uncharacterized protein from Methanocaldococcus jannaschii (strain ATCC 43067 / DSM 2661 / JAL-1 / JCM 10045 / NBRC 100440) (Methanococcus jannaschii).